A 126-amino-acid polypeptide reads, in one-letter code: Fluoride-specific ion channel FluC (126 aa).

4 consecutive transmembrane segments (helical) span residues 5–25 (GFVAVGVGAAVGAWLRWFFSV), 36–56 (YGTLASNLVGGYLIGLAVAFF), 69–89 (LAVTGFLGGLTTFSTFSSEVI), and 99–119 (WAMLHLAMHLGGSLLLTAFGI). The Na(+) site is built by glycine 76 and threonine 79.

Belongs to the fluoride channel Fluc/FEX (TC 1.A.43) family.

It localises to the cell inner membrane. It catalyses the reaction fluoride(in) = fluoride(out). Its activity is regulated as follows. Na(+) is not transported, but it plays an essential structural role and its presence is essential for fluoride channel function. Functionally, fluoride-specific ion channel. Important for reducing fluoride concentration in the cell, thus reducing its toxicity. This is Fluoride-specific ion channel FluC from Cupriavidus metallidurans (strain ATCC 43123 / DSM 2839 / NBRC 102507 / CH34) (Ralstonia metallidurans).